The following is a 589-amino-acid chain: ATP-dependent lipid A-core flippase (589 aa).

The next 6 helical transmembrane spans lie at valine 33–isoleucine 53, leucine 70–serine 90, valine 148–leucine 168, glycine 170–alanine 190, leucine 262–glutamate 282, and threonine 283–leucine 303. Positions valine 33–lysine 315 constitute an ABC transmembrane type-1 domain. Residues isoleucine 347–valine 583 form the ABC transporter domain. An ATP-binding site is contributed by glycine 381–threonine 388.

The protein belongs to the ABC transporter superfamily. Lipid exporter (TC 3.A.1.106) family. In terms of assembly, homodimer.

The protein resides in the cell inner membrane. It carries out the reaction ATP + H2O + lipid A-core oligosaccharideSide 1 = ADP + phosphate + lipid A-core oligosaccharideSide 2.. Involved in lipopolysaccharide (LPS) biosynthesis. Translocates lipid A-core from the inner to the outer leaflet of the inner membrane. Transmembrane domains (TMD) form a pore in the inner membrane and the ATP-binding domain (NBD) is responsible for energy generation. This chain is ATP-dependent lipid A-core flippase, found in Alkalilimnicola ehrlichii (strain ATCC BAA-1101 / DSM 17681 / MLHE-1).